The primary structure comprises 238 residues: MHRVSLQAAYVLHSRPYRESSYIVDLITEADGKASAVLKGGGRRKGVPGTLQPFTELEVELGGRGELKSLIRYETTNIRYPLAGAALYAGLYLNELLVKLLQPLEGCRKVFDAYKSSLTFLSLPQPNLEPGIRELEFALLNELGFGVDFCVESATGDIVKNNIAYYFSLTEGVSRTPEPCSVVIEGHHLIAIAGRDWSVPGSLSAAKRLTRRCLDELLGGRPLHSRELMRSYLKLTKG.

Belongs to the RecO family.

In terms of biological role, involved in DNA repair and RecF pathway recombination. This is DNA repair protein RecO from Hahella chejuensis (strain KCTC 2396).